The sequence spans 154 residues: Large ribosomal subunit protein uL13 (154 aa).

The tract at residues 132–154 is disordered; sequence PHEAQQPEVLDVKSMNAKNTRSA.

The protein belongs to the universal ribosomal protein uL13 family. As to quaternary structure, part of the 50S ribosomal subunit.

Its function is as follows. This protein is one of the early assembly proteins of the 50S ribosomal subunit, although it is not seen to bind rRNA by itself. It is important during the early stages of 50S assembly. The protein is Large ribosomal subunit protein uL13 of Paracoccus denitrificans (strain Pd 1222).